Reading from the N-terminus, the 528-residue chain is Bifunctional purine biosynthesis protein PurH (528 aa).

The region spanning threonine 2 to valine 149 is the MGS-like domain.

Belongs to the PurH family.

It catalyses the reaction (6R)-10-formyltetrahydrofolate + 5-amino-1-(5-phospho-beta-D-ribosyl)imidazole-4-carboxamide = 5-formamido-1-(5-phospho-D-ribosyl)imidazole-4-carboxamide + (6S)-5,6,7,8-tetrahydrofolate. It carries out the reaction IMP + H2O = 5-formamido-1-(5-phospho-D-ribosyl)imidazole-4-carboxamide. Its pathway is purine metabolism; IMP biosynthesis via de novo pathway; 5-formamido-1-(5-phospho-D-ribosyl)imidazole-4-carboxamide from 5-amino-1-(5-phospho-D-ribosyl)imidazole-4-carboxamide (10-formyl THF route): step 1/1. It participates in purine metabolism; IMP biosynthesis via de novo pathway; IMP from 5-formamido-1-(5-phospho-D-ribosyl)imidazole-4-carboxamide: step 1/1. This Roseobacter denitrificans (strain ATCC 33942 / OCh 114) (Erythrobacter sp. (strain OCh 114)) protein is Bifunctional purine biosynthesis protein PurH.